A 473-amino-acid polypeptide reads, in one-letter code: Glutamate--tRNA ligase (473 aa).

Residues 9 to 19 carry the 'HIGH' region motif; it reads PSPTGELHLGS. The 'KMSKS' region signature appears at 237–241; sequence KLSKK. K240 provides a ligand contact to ATP.

This sequence belongs to the class-I aminoacyl-tRNA synthetase family. Glutamate--tRNA ligase type 1 subfamily. As to quaternary structure, monomer.

Its subcellular location is the cytoplasm. The catalysed reaction is tRNA(Glu) + L-glutamate + ATP = L-glutamyl-tRNA(Glu) + AMP + diphosphate. Functionally, catalyzes the attachment of glutamate to tRNA(Glu) in a two-step reaction: glutamate is first activated by ATP to form Glu-AMP and then transferred to the acceptor end of tRNA(Glu). This is Glutamate--tRNA ligase from Wigglesworthia glossinidia brevipalpis.